The sequence spans 240 residues: Ubiquinone biosynthesis O-methyltransferase (240 aa).

S-adenosyl-L-methionine-binding residues include Arg-44, Gly-64, Asp-85, and Met-129.

The protein belongs to the methyltransferase superfamily. UbiG/COQ3 family.

It catalyses the reaction a 3-demethylubiquinol + S-adenosyl-L-methionine = a ubiquinol + S-adenosyl-L-homocysteine + H(+). It carries out the reaction a 3-(all-trans-polyprenyl)benzene-1,2-diol + S-adenosyl-L-methionine = a 2-methoxy-6-(all-trans-polyprenyl)phenol + S-adenosyl-L-homocysteine + H(+). Its pathway is cofactor biosynthesis; ubiquinone biosynthesis. Its function is as follows. O-methyltransferase that catalyzes the 2 O-methylation steps in the ubiquinone biosynthetic pathway. The sequence is that of Ubiquinone biosynthesis O-methyltransferase from Escherichia coli O6:H1 (strain CFT073 / ATCC 700928 / UPEC).